The chain runs to 90 residues: Probable Fe(2+)-trafficking protein (90 aa).

Belongs to the Fe(2+)-trafficking protein family.

Its function is as follows. Could be a mediator in iron transactions between iron acquisition and iron-requiring processes, such as synthesis and/or repair of Fe-S clusters in biosynthetic enzymes. The protein is Probable Fe(2+)-trafficking protein of Marinobacter nauticus (strain ATCC 700491 / DSM 11845 / VT8) (Marinobacter aquaeolei).